The sequence spans 1005 residues: Protein TIC 214 (1005 aa).

6 helical membrane-spanning segments follow: residues Val25 to Leu45, Phe67 to Leu87, His91 to Gly111, Ser131 to Gly151, Phe177 to Trp197, and Leu304 to Tyr324. Disordered regions lie at residues Val457 to Glu481 and Lys767 to Gln833. Residues Lys783–Ser810 show a composition bias toward basic residues. The span at Lys811 to Ser824 shows a compositional bias: basic and acidic residues.

The protein belongs to the TIC214 family. As to quaternary structure, part of the Tic complex.

The protein resides in the plastid. It is found in the chloroplast inner membrane. Functionally, involved in protein precursor import into chloroplasts. May be part of an intermediate translocation complex acting as a protein-conducting channel at the inner envelope. This chain is Protein TIC 214, found in Oenothera berteroana (Bertero's evening primrose).